Reading from the N-terminus, the 824-residue chain is AMP deaminase 2 (824 aa).

The tract at residues 1 to 43 (MASYPGPGKSKAKYPFKKRASLQASAAAPEARSGLGASPLQSA) is disordered. The segment covering 10 to 20 (SKAKYPFKKRA) has biased composition (basic residues). Ser-21 bears the Phosphoserine mark. Low complexity predominate over residues 21–33 (SLQASAAAPEARS). Arg-44 bears the Omega-N-methylarginine mark. Residues Ser-45, Ser-63, and Ser-79 each carry the phosphoserine modification. Tyr-90 bears the Phosphotyrosine mark. Phosphoserine occurs at positions 96 and 113. Thr-133 carries the phosphothreonine modification. Phosphoserine occurs at positions 135 and 137. Residues His-364 and His-366 each contribute to the Zn(2+) site. Residues His-366 and 435-440 (KFNAKY) contribute to the substrate site. A Zn(2+)-binding site is contributed by His-633. Residue Glu-636 coordinates substrate. Residue His-655 is the Proton acceptor of the active site. Asp-710 provides a ligand contact to Zn(2+). 711–714 (DPLQ) is a binding site for substrate.

It belongs to the metallo-dependent hydrolases superfamily. Adenosine and AMP deaminases family. As to quaternary structure, homotetramer. Zn(2+) is required as a cofactor.

It carries out the reaction AMP + H2O + H(+) = IMP + NH4(+). It functions in the pathway purine metabolism; IMP biosynthesis via salvage pathway; IMP from AMP: step 1/1. Its function is as follows. AMP deaminase plays a critical role in energy metabolism. Catalyzes the deamination of AMP to IMP and plays an important role in the purine nucleotide cycle. In Rattus norvegicus (Rat), this protein is AMP deaminase 2.